The primary structure comprises 317 residues: Mitochondrial thiamine pyrophosphate carrier 1 (317 aa).

The next 6 helical transmembrane spans lie at 21-41 (AVSG…ARSV), 86-106 (VPAS…YAWL), 122-142 (LAVG…LDLL), 176-196 (GGAW…GIYE), 207-227 (LPWL…AAVF), and 281-300 (GLTM…LWVY). Solcar repeat units follow at residues 22–109 (VSGL…LNTA), 116–201 (PPQA…CTIA), and 206–306 (GLPW…CLRL).

It belongs to the mitochondrial carrier (TC 2.A.29) family.

It localises to the mitochondrion inner membrane. Its function is as follows. Mitochondrial transporter that mediates uptake of thiamine pyrophosphate (ThPP) into mitochondria. The protein is Mitochondrial thiamine pyrophosphate carrier 1 (TPC1) of Eremothecium gossypii (strain ATCC 10895 / CBS 109.51 / FGSC 9923 / NRRL Y-1056) (Yeast).